Reading from the N-terminus, the 433-residue chain is Eukaryotic peptide chain release factor subunit 1 (433 aa).

Gln182 bears the N5-methylglutamine mark. A Phosphoserine modification is found at Ser425.

Belongs to the eukaryotic release factor 1 family. As to quaternary structure, component of the eRF1-eRF3-GTP ternary complex, composed of sup45/eRF1, sup35/eRF3 and GTP.

The protein resides in the cytoplasm. In terms of biological role, component of the eRF1-eRF3-GTP ternary complex, a ternary complex that mediates translation termination in response to the termination codons. The eRF1-eRF3-GTP complex binds to a stop codon in the ribosomal A-site. Sup45/eRF1 is responsible for stop codon recognition and inducing hydrolysis of peptidyl-tRNA. Following GTP hydrolysis by sup35/eRF3, sup35/eRF3 dissociates, permitting sup45/eRF1 to accommodate fully in the A-site. In Schizosaccharomyces pombe (strain 972 / ATCC 24843) (Fission yeast), this protein is Eukaryotic peptide chain release factor subunit 1 (sup45).